A 274-amino-acid chain; its full sequence is Large ribosomal subunit protein uL2 (274 aa).

The interval 223-264 (VAMNPVDHPHGGGEGRTSGGRHPVSPWGVPTKGYKTRSNKRT) is disordered.

The protein belongs to the universal ribosomal protein uL2 family. In terms of assembly, part of the 50S ribosomal subunit. Forms a bridge to the 30S subunit in the 70S ribosome.

Functionally, one of the primary rRNA binding proteins. Required for association of the 30S and 50S subunits to form the 70S ribosome, for tRNA binding and peptide bond formation. It has been suggested to have peptidyltransferase activity; this is somewhat controversial. Makes several contacts with the 16S rRNA in the 70S ribosome. This Shewanella denitrificans (strain OS217 / ATCC BAA-1090 / DSM 15013) protein is Large ribosomal subunit protein uL2.